A 457-amino-acid chain; its full sequence is MLSDREVLSTLEMLKNEHLDVRTVTLGVSLFDCAGHDPEKFKENVQRKIFRLAGNLVKVCDEIGIRYGIPVVNKRVAVSPIAVAACSFSRPQMVEVARKLDETAADIGIDFIGGFGALVEKGFTEGDRALIAAIPEALASTRRVCSSVNVASTRAGINMDAVYLMGKTIKDAAELTREADGIACAKLCVFANIPEDVPFMAGAYLGVGEPDSVINVGVSGPGVVKKAIDRARAANPHLDLGALSDIIKRTSFKVTRVGELIGRQVAEKLGVPFGVVDLSLAPTPNVGDSVGEIFQSLGLQSIGVPGTTAALALLNDAVKKGGAFASSYVGGLSGAFIPVSEDLNIAAAASRGYLSMEKLEAMTSVCSVGLDMVALAGDTSAETLAGIIADEMAIGVINKKTTAARLIPVPGKKAGEKASFGGLLGEAVIIAVSSNFGSREFISLGGRIPAPIHSLIN.

This sequence belongs to the UPF0210 family. Homodimer.

The polypeptide is UPF0210 protein Sfum_2948 (Syntrophobacter fumaroxidans (strain DSM 10017 / MPOB)).